The chain runs to 624 residues: MSMKGQETRGFQSEVKQLLHLMIHSLYSNKEIFLRELISNASDAADKLRFRALSHPELFEGDGELRVRLSFDKEKRTLTLSDNGIGMSREEVIDNLGTIAKSGTKAFLESIGSDQAKDSQLIGQFGVGFYSAFIVADKVTVRTRAAGAPADAGVFWESAGEGDYTIADITKEDRGTEITLHLREGEDEYLDNWRLRSVISKYSDHIALPVEIESKNEEDGTVTWEKINKAQALWTRGKAEITDDEYKAFYKHIAHDFTDPLIWSHNRVEGKQEYTSLLYIPAQAPWDMWNRDHKHGLKLYVQRVFIMDDAEQFMPNYLRFVRGLIDSNDLPLNVSREILQDSRVTQNLRSALTKRVLQMLEKLAKDDAEKYQQFWQQFGMALKEGPAEDGSNKDTIAKLLRFASTHTDSSAQTVSLEDYVSRMAEGQEKIYYITADSYAAAKNSPHLELFRKKGIEVLLLSDRIDEWMMSYLTEFDGKAFQSVSKADDSLNKLADEERPEQQEADKALEPFVERVKTLLGERVKDVRLTHRLTDTPAIVTTDADEMSTQMAKLFAAAGQQAPEVKYIFELNPEHSLVKRAADVADDTQFAEWVELLLDQALLAERGTLEDPNQFIRRMNQLLTA.

The a; substrate-binding stretch occupies residues 1–336 (MSMKGQETRG…SNDLPLNVSR (336 aa)). The interval 337 to 552 (EILQDSRVTQ…ADEMSTQMAK (216 aa)) is b. The segment at 553 to 624 (LFAAAGQQAP…IRRMNQLLTA (72 aa)) is c.

This sequence belongs to the heat shock protein 90 family. In terms of assembly, homodimer.

The protein localises to the cytoplasm. In terms of biological role, molecular chaperone. Has ATPase activity. The sequence is that of Chaperone protein HtpG from Yersinia enterocolitica serotype O:8 / biotype 1B (strain NCTC 13174 / 8081).